The chain runs to 226 residues: Thiamine-phosphate synthase (226 aa).

4-amino-2-methyl-5-(diphosphooxymethyl)pyrimidine is bound by residues 46 to 50 (QFRDK) and Asp-83. 2 residues coordinate Mg(2+): Asp-84 and Asp-103. Ser-122 is a binding site for 4-amino-2-methyl-5-(diphosphooxymethyl)pyrimidine. Residue 149–151 (TQS) participates in 2-[(2R,5Z)-2-carboxy-4-methylthiazol-5(2H)-ylidene]ethyl phosphate binding. Lys-152 provides a ligand contact to 4-amino-2-methyl-5-(diphosphooxymethyl)pyrimidine. 2-[(2R,5Z)-2-carboxy-4-methylthiazol-5(2H)-ylidene]ethyl phosphate contacts are provided by residues Gly-181 and 201-202 (IT).

This sequence belongs to the thiamine-phosphate synthase family. The cofactor is Mg(2+).

It carries out the reaction 2-[(2R,5Z)-2-carboxy-4-methylthiazol-5(2H)-ylidene]ethyl phosphate + 4-amino-2-methyl-5-(diphosphooxymethyl)pyrimidine + 2 H(+) = thiamine phosphate + CO2 + diphosphate. The catalysed reaction is 2-(2-carboxy-4-methylthiazol-5-yl)ethyl phosphate + 4-amino-2-methyl-5-(diphosphooxymethyl)pyrimidine + 2 H(+) = thiamine phosphate + CO2 + diphosphate. It catalyses the reaction 4-methyl-5-(2-phosphooxyethyl)-thiazole + 4-amino-2-methyl-5-(diphosphooxymethyl)pyrimidine + H(+) = thiamine phosphate + diphosphate. It functions in the pathway cofactor biosynthesis; thiamine diphosphate biosynthesis; thiamine phosphate from 4-amino-2-methyl-5-diphosphomethylpyrimidine and 4-methyl-5-(2-phosphoethyl)-thiazole: step 1/1. Its function is as follows. Condenses 4-methyl-5-(beta-hydroxyethyl)thiazole monophosphate (THZ-P) and 2-methyl-4-amino-5-hydroxymethyl pyrimidine pyrophosphate (HMP-PP) to form thiamine monophosphate (TMP). The chain is Thiamine-phosphate synthase from Haemophilus influenzae (strain 86-028NP).